The following is a 103-amino-acid chain: Putative double-stranded DNA mimic protein APJL_1366 (103 aa).

It belongs to the putative dsDNA mimic protein family.

May act as a double-stranded DNA (dsDNA) mimic. Probably regulates the activity of a dsDNA-binding protein. In Actinobacillus pleuropneumoniae serotype 3 (strain JL03), this protein is Putative double-stranded DNA mimic protein APJL_1366.